The following is a 554-amino-acid chain: Oxygen-dependent choline dehydrogenase (554 aa).

4 to 33 (DYIIIGAGSAGNVLATRLTEDPNTTVLLLE) contacts FAD. The active-site Proton acceptor is His473.

It belongs to the GMC oxidoreductase family. It depends on FAD as a cofactor.

It catalyses the reaction choline + A = betaine aldehyde + AH2. It carries out the reaction betaine aldehyde + NAD(+) + H2O = glycine betaine + NADH + 2 H(+). It functions in the pathway amine and polyamine biosynthesis; betaine biosynthesis via choline pathway; betaine aldehyde from choline (cytochrome c reductase route): step 1/1. Its function is as follows. Involved in the biosynthesis of the osmoprotectant glycine betaine. Catalyzes the oxidation of choline to betaine aldehyde and betaine aldehyde to glycine betaine at the same rate. This chain is Oxygen-dependent choline dehydrogenase, found in Klebsiella pneumoniae subsp. pneumoniae (strain ATCC 700721 / MGH 78578).